The primary structure comprises 589 residues: Aspartate--tRNA ligase (589 aa).

L-aspartate is bound at residue Glu-171. Residues 195-198 (QLFK) form an aspartate region. Arg-217 contacts L-aspartate. ATP is bound by residues 217–219 (RDE) and Gln-226. An L-aspartate-binding site is contributed by His-448. Position 482 (Glu-482) interacts with ATP. Arg-489 contacts L-aspartate. 534-537 (GLDR) lines the ATP pocket.

This sequence belongs to the class-II aminoacyl-tRNA synthetase family. Type 1 subfamily. In terms of assembly, homodimer.

It is found in the cytoplasm. It catalyses the reaction tRNA(Asp) + L-aspartate + ATP = L-aspartyl-tRNA(Asp) + AMP + diphosphate. Functionally, catalyzes the attachment of L-aspartate to tRNA(Asp) in a two-step reaction: L-aspartate is first activated by ATP to form Asp-AMP and then transferred to the acceptor end of tRNA(Asp). The chain is Aspartate--tRNA ligase from Idiomarina loihiensis (strain ATCC BAA-735 / DSM 15497 / L2-TR).